The primary structure comprises 163 residues: Ankyrin repeat domain-containing protein 37 (163 aa).

ANK repeat units follow at residues 29–58, 62–91, and 95–124; these read LGQS…DVNQ, FGEA…RIDM, and DGHT…TQDT. The short motif at 129–149 is the Nuclear localization signal element; the sequence is QSSLHNLKETAAGVKRGQCCQ.

It localises to the nucleus. The protein localises to the cytoplasm. In Xenopus tropicalis (Western clawed frog), this protein is Ankyrin repeat domain-containing protein 37 (ankrd37).